Reading from the N-terminus, the 1041-residue chain is FHIP family protein CG3558 (1041 aa).

Ser490 is modified (phosphoserine). Disordered regions lie at residues Arg619 to Leu648, Lys792 to Leu818, Ser858 to Ser879, Asp903 to Ser947, and Ser959 to Ala986. Residues Thr628 to Ser637 show a composition bias toward polar residues. A Phosphoserine modification is found at Ser797. Over residues His800 to Leu818 the composition is skewed to polar residues. Over residues Asp903–Pro925 the composition is skewed to polar residues. A compositionally biased stretch (low complexity) spans Ala927–Ser947. Over residues Ser959–Thr968 the composition is skewed to polar residues.

Belongs to the FHIP family.

The sequence is that of FHIP family protein CG3558 from Drosophila melanogaster (Fruit fly).